The chain runs to 222 residues: MRGKFIVVEGLEGAGKSSVIGLIVKALTDAGMRVEQTREPGGTPMAEAIRECVKHDWDETVSEETELLLMYAARVQLLTNKIYPSLNAGAWVVGDRHDLSSQAYQGGGRGVSEKTMTAISDIALNGFKPDLTLYLDVDPAVGLERARGRGELDRIEQAGLGFFERTRARYLSLAENDESIIVVNAMQPMEQVHQDVISIIANYVSQHIDEGSESHKTDQGNN.

Residue 10-17 (GLEGAGKS) participates in ATP binding.

Belongs to the thymidylate kinase family.

The enzyme catalyses dTMP + ATP = dTDP + ADP. Its function is as follows. Phosphorylation of dTMP to form dTDP in both de novo and salvage pathways of dTTP synthesis. This is Thymidylate kinase from Alteromonas mediterranea (strain DSM 17117 / CIP 110805 / LMG 28347 / Deep ecotype).